A 766-amino-acid polypeptide reads, in one-letter code: Darlin (766 aa).

4 ARM repeats span residues 82-119 (QLFEFLLPNGVETLNTDTTVEQSELFSMVCRLLGNLTY), 167-208 (DFIQ…NLVD), 423-464 (EPNC…NLTL), and 465-537 (PTIN…ASMD). The interval 561-585 (EEKEKTIEKTDEKTDEKTNEKKQSK) is disordered. The stretch at 610 to 649 (HQEKMKQLIEESVEPFFSLLQSPFPILQVEGAKGLVLLIK) is one ARM 5 repeat.

This sequence belongs to the RAP1GDS1 family. Binds to small GTPases racE, racC but not rab21. Binds preferentially to GDP-bound racE.

Part of a signaling pathway that initiates the aggregation and leads to the formation of aggregation centers or streams. Not essential for cytokinesis, pinocytosis or phagocytosis. Not essential for development, except in starvation-induced aggregation. This Dictyostelium discoideum (Social amoeba) protein is Darlin (darA).